We begin with the raw amino-acid sequence, 494 residues long: Sucrose-6-phosphate hydrolase (494 aa).

Substrate contacts are provided by residues 45–48 (LLND), Gln64, 107–108 (YS), 168–169 (RD), and Glu223. Residue Asp48 is part of the active site.

It belongs to the glycosyl hydrolase 32 family.

The enzyme catalyses Hydrolysis of terminal non-reducing beta-D-fructofuranoside residues in beta-D-fructofuranosides.. Its pathway is glycan biosynthesis; sucrose metabolism. This chain is Sucrose-6-phosphate hydrolase (scrB), found in Staphylococcus xylosus.